A 389-amino-acid chain; its full sequence is Probable nitrate transporter NarT (389 aa).

12 consecutive transmembrane segments (helical) span residues 14–34 (TLSL…MPFI), 45–65 (ISII…PFGY), 69–89 (IVGA…PIFF), 97–117 (GMLM…SVGV), 139–159 (GNIG…IIGW), 161–181 (TTVR…FIFG), 211–231 (WYFI…NYLV), 246–266 (GVFI…GDKF), 268–288 (AVKV…ILGI), 294–314 (LFTV…GLIF), 331–351 (IVSM…TYVA), and 353–373 (LTGS…IALF).

Belongs to the major facilitator superfamily. Nitrate/nitrite porter (TC 2.A.1.8) family.

Its subcellular location is the cell membrane. In terms of biological role, probably required for nitrate uptake under anoxic conditions. Also possibly involved in excretion of nitrite produced by the dissimilatory reduction of nitrate. The protein is Probable nitrate transporter NarT (narT) of Staphylococcus aureus (strain USA300).